We begin with the raw amino-acid sequence, 194 residues long: Protein GrpE (194 aa).

Over residues 1–14 (MSKMNPNEKKENAS) the composition is skewed to basic and acidic residues. The tract at residues 1–48 (MSKMNPNEKKENASKNENVNNEEATNLQEEQSNAADEAAGSDNVSGEV) is disordered. The segment covering 24-34 (ATNLQEEQSNA) has biased composition (polar residues).

It belongs to the GrpE family. In terms of assembly, homodimer.

It localises to the cytoplasm. Its function is as follows. Participates actively in the response to hyperosmotic and heat shock by preventing the aggregation of stress-denatured proteins, in association with DnaK and GrpE. It is the nucleotide exchange factor for DnaK and may function as a thermosensor. Unfolded proteins bind initially to DnaJ; upon interaction with the DnaJ-bound protein, DnaK hydrolyzes its bound ATP, resulting in the formation of a stable complex. GrpE releases ADP from DnaK; ATP binding to DnaK triggers the release of the substrate protein, thus completing the reaction cycle. Several rounds of ATP-dependent interactions between DnaJ, DnaK and GrpE are required for fully efficient folding. This Parabacteroides distasonis (strain ATCC 8503 / DSM 20701 / CIP 104284 / JCM 5825 / NCTC 11152) protein is Protein GrpE.